A 485-amino-acid chain; its full sequence is Aspartyl/glutamyl-tRNA(Asn/Gln) amidotransferase subunit B (485 aa).

This sequence belongs to the GatB/GatE family. GatB subfamily. In terms of assembly, heterotrimer of A, B and C subunits.

The catalysed reaction is L-glutamyl-tRNA(Gln) + L-glutamine + ATP + H2O = L-glutaminyl-tRNA(Gln) + L-glutamate + ADP + phosphate + H(+). It carries out the reaction L-aspartyl-tRNA(Asn) + L-glutamine + ATP + H2O = L-asparaginyl-tRNA(Asn) + L-glutamate + ADP + phosphate + 2 H(+). Functionally, allows the formation of correctly charged Asn-tRNA(Asn) or Gln-tRNA(Gln) through the transamidation of misacylated Asp-tRNA(Asn) or Glu-tRNA(Gln) in organisms which lack either or both of asparaginyl-tRNA or glutaminyl-tRNA synthetases. The reaction takes place in the presence of glutamine and ATP through an activated phospho-Asp-tRNA(Asn) or phospho-Glu-tRNA(Gln). This Cupriavidus taiwanensis (strain DSM 17343 / BCRC 17206 / CCUG 44338 / CIP 107171 / LMG 19424 / R1) (Ralstonia taiwanensis (strain LMG 19424)) protein is Aspartyl/glutamyl-tRNA(Asn/Gln) amidotransferase subunit B.